The chain runs to 338 residues: MNPRPLIGITMGDPVGIGPEIILTALAGTSVYEKCRPLVIGDPGVLGQAMAVAGYAPVIHMTDTPETGVYRPGTISMFSPAPPLSPVTWGEPTPETGGAMEAWITTAVDMAMAGAISAMVTCPINKEALKMAGSAFAGHTEMLAMRTGTNRYAMMLAGNRLRVVLVTIHTALQNVPGLLSVDAIADTILLTVESLKQRFGMNAPRVAVAGLNPHAGEGGLFGDEEARLITPAIEAARRKTEAAITGPWPPDTVFVKAAAGDFDAVVCMYHDQGLIPFKLLHFEDGVNTTLGLPIIRTSVDHGTAYDIAGTGRADCRSLTAAIDMAIDQAACLGKRPAA.

The substrate site is built by H139 and T140. A divalent metal cation is bound by residues H169, H214, and H270. Positions 278, 287, and 296 each coordinate substrate.

Belongs to the PdxA family. In terms of assembly, homodimer. The cofactor is Zn(2+). Mg(2+) is required as a cofactor. Co(2+) serves as cofactor.

It is found in the cytoplasm. The enzyme catalyses 4-(phosphooxy)-L-threonine + NAD(+) = 3-amino-2-oxopropyl phosphate + CO2 + NADH. It participates in cofactor biosynthesis; pyridoxine 5'-phosphate biosynthesis; pyridoxine 5'-phosphate from D-erythrose 4-phosphate: step 4/5. In terms of biological role, catalyzes the NAD(P)-dependent oxidation of 4-(phosphooxy)-L-threonine (HTP) into 2-amino-3-oxo-4-(phosphooxy)butyric acid which spontaneously decarboxylates to form 3-amino-2-oxopropyl phosphate (AHAP). This is 4-hydroxythreonine-4-phosphate dehydrogenase from Desulfosudis oleivorans (strain DSM 6200 / JCM 39069 / Hxd3) (Desulfococcus oleovorans).